Here is a 272-residue protein sequence, read N- to C-terminus: Phosphatidylglycerol--prolipoprotein diacylglyceryl transferase (272 aa).

A run of 4 helical transmembrane segments spans residues 24-44 (WYGIAYVLALLVALWVAKWIA), 59-79 (YFIWVEVGVILGARLGYILFY), 102-122 (FIGIRGMSYHGAVIGFLIASF), and 129-149 (GVKFWMLMDLVGISVPLGYVF). An a 1,2-diacyl-sn-glycero-3-phospho-(1'-sn-glycerol)-binding site is contributed by Arg-151. The next 3 helical transmembrane spans lie at 180–200 (PSQLYEAFLEGIVLFVILYAW), 208–228 (GQLGIMYLILYALARFVAEFW), and 244–264 (MGQLLSLAMAIPCLVLWGYLA).

The protein belongs to the Lgt family.

It is found in the cell inner membrane. The catalysed reaction is L-cysteinyl-[prolipoprotein] + a 1,2-diacyl-sn-glycero-3-phospho-(1'-sn-glycerol) = an S-1,2-diacyl-sn-glyceryl-L-cysteinyl-[prolipoprotein] + sn-glycerol 1-phosphate + H(+). It participates in protein modification; lipoprotein biosynthesis (diacylglyceryl transfer). In terms of biological role, catalyzes the transfer of the diacylglyceryl group from phosphatidylglycerol to the sulfhydryl group of the N-terminal cysteine of a prolipoprotein, the first step in the formation of mature lipoproteins. The sequence is that of Phosphatidylglycerol--prolipoprotein diacylglyceryl transferase from Wolinella succinogenes (strain ATCC 29543 / DSM 1740 / CCUG 13145 / JCM 31913 / LMG 7466 / NCTC 11488 / FDC 602W) (Vibrio succinogenes).